We begin with the raw amino-acid sequence, 41 residues long: Urotensin-1 (41 aa).

Position 41 is a valine amide (valine 41).

It belongs to the sauvagine/corticotropin-releasing factor/urotensin I family.

Its subcellular location is the secreted. In terms of biological role, urotensin is found in the teleost caudal neurosecretory system. It has a suggested role in osmoregulation and as a corticotropin-releasing factor. In Catostomus commersonii (White sucker), this protein is Urotensin-1.